Reading from the N-terminus, the 338-residue chain is RNA 3'-terminal phosphate cyclase (338 aa).

ATP contacts are provided by residues Gln103 and 283–287 (YLADQ). The active-site Tele-AMP-histidine intermediate is the His308.

The protein belongs to the RNA 3'-terminal cyclase family. Type 1 subfamily.

Its subcellular location is the cytoplasm. It catalyses the reaction a 3'-end 3'-phospho-ribonucleotide-RNA + ATP = a 3'-end 2',3'-cyclophospho-ribonucleotide-RNA + AMP + diphosphate. Catalyzes the conversion of 3'-phosphate to a 2',3'-cyclic phosphodiester at the end of RNA. The mechanism of action of the enzyme occurs in 3 steps: (A) adenylation of the enzyme by ATP; (B) transfer of adenylate to an RNA-N3'P to produce RNA-N3'PP5'A; (C) and attack of the adjacent 2'-hydroxyl on the 3'-phosphorus in the diester linkage to produce the cyclic end product. The biological role of this enzyme is unknown but it is likely to function in some aspects of cellular RNA processing. The polypeptide is RNA 3'-terminal phosphate cyclase (Escherichia coli (strain K12 / MC4100 / BW2952)).